A 391-amino-acid chain; its full sequence is Mannonate dehydratase (391 aa).

Belongs to the mannonate dehydratase family. Requires Fe(2+) as cofactor. Mn(2+) serves as cofactor.

The catalysed reaction is D-mannonate = 2-dehydro-3-deoxy-D-gluconate + H2O. It participates in carbohydrate metabolism; pentose and glucuronate interconversion. Functionally, catalyzes the dehydration of D-mannonate. The sequence is that of Mannonate dehydratase from Marinomonas sp. (strain MWYL1).